We begin with the raw amino-acid sequence, 292 residues long: Peroxisomal 2,4-dienoyl-CoA reductase [(3E)-enoyl-CoA-producing] (292 aa).

A2 bears the N-acetylalanine mark. NADP(+)-binding positions include 35–40 (GGGSGI), 60–64 (RSLPR), and D86. R60 is a binding site for substrate. Substrate is bound by residues R88, F118, and 126 to 128 (SFN). K151 is modified (N6-acetyllysine). NADP(+) is bound by residues K182 and 208–214 (PGPISGT). R219 contacts substrate. S287 carries the phosphoserine modification. A Microbody targeting signal motif is present at residues 290–292 (AKL). Residue K291 is modified to N6-acetyllysine.

The protein belongs to the short-chain dehydrogenases/reductases (SDR) family. 2,4-dienoyl-CoA reductase subfamily. As to quaternary structure, monomer, dimer and oligomer.

Its subcellular location is the peroxisome. The catalysed reaction is a (2E,4Z)-dienoyl-CoA + NADPH + H(+) = a 4,5-saturated-(3E)-enoyl-CoA + NADP(+). It catalyses the reaction a (2E,4E)-dienoyl-CoA + NADPH + H(+) = a 4,5-saturated-(3E)-enoyl-CoA + NADP(+). It carries out the reaction (2E,4E)-hexadienoyl-CoA + NADPH + H(+) = (3E)-hexenoyl-CoA + NADP(+). The enzyme catalyses (2E,4E)-decadienoyl-CoA + NADPH + H(+) = (3E)-decenoyl-CoA + NADP(+). The catalysed reaction is (2E,4Z,7Z,10Z,13Z,16Z,19Z)-docosaheptaenoyl-CoA + NADPH + H(+) = (3E,7Z,10Z,13Z,16Z,19Z)-docosahexaenoyl-CoA + NADP(+). Auxiliary enzyme of beta-oxidation. Participates in the degradation of unsaturated fatty enoyl-CoA esters having double bonds in both even- and odd-numbered positions in peroxisome. Catalyzes the NADP-dependent reduction of 2,4-dienoyl-CoA to yield trans-3-enoyl-CoA. Has activity towards short and medium chain 2,4-dienoyl-CoAs, but also towards 2,4,7,10,13,16,19-docosaheptaenoyl-CoA, suggesting that it does not constitute a rate limiting step in the peroxisomal degradation of docosahexaenoic acid. In Pongo abelii (Sumatran orangutan), this protein is Peroxisomal 2,4-dienoyl-CoA reductase [(3E)-enoyl-CoA-producing] (DECR2).